The chain runs to 1036 residues: Isoleucine--tRNA ligase (1036 aa).

Residues Pro-46–His-56 carry the 'HIGH' region motif. A 'KMSKS' region motif is present at residues Lys-589–Arg-593. Position 592 (Lys-592) interacts with ATP.

This sequence belongs to the class-I aminoacyl-tRNA synthetase family. IleS type 2 subfamily. In terms of assembly, monomer. Requires Zn(2+) as cofactor.

It localises to the cytoplasm. The enzyme catalyses tRNA(Ile) + L-isoleucine + ATP = L-isoleucyl-tRNA(Ile) + AMP + diphosphate. Its function is as follows. Catalyzes the attachment of isoleucine to tRNA(Ile). As IleRS can inadvertently accommodate and process structurally similar amino acids such as valine, to avoid such errors it has two additional distinct tRNA(Ile)-dependent editing activities. One activity is designated as 'pretransfer' editing and involves the hydrolysis of activated Val-AMP. The other activity is designated 'posttransfer' editing and involves deacylation of mischarged Val-tRNA(Ile). This chain is Isoleucine--tRNA ligase, found in Chlamydia trachomatis serovar A (strain ATCC VR-571B / DSM 19440 / HAR-13).